A 387-amino-acid polypeptide reads, in one-letter code: Bifunctional chorismate mutase/prephenate dehydratase (387 aa).

Positions 1–92 (MNPDNPLLAL…DSVLTQQALL (92 aa)) constitute a Chorismate mutase domain. Arginine 11, arginine 28, lysine 39, aspartate 48, glutamate 52, serine 84, and glutamine 88 together coordinate substrate. In terms of domain architecture, Prephenate dehydratase spans 105-285 (RIAFLGPKGS…NHTRFIVLAR (181 aa)). One can recognise an ACT domain in the interval 299–376 (TLIMATGQQA…RSLKVLGCYP (78 aa)).

Its subcellular location is the cytoplasm. It carries out the reaction chorismate = prephenate. The enzyme catalyses prephenate + H(+) = 3-phenylpyruvate + CO2 + H2O. The protein operates within amino-acid biosynthesis; L-phenylalanine biosynthesis; phenylpyruvate from prephenate: step 1/1. It functions in the pathway metabolic intermediate biosynthesis; prephenate biosynthesis; prephenate from chorismate: step 1/1. Catalyzes the Claisen rearrangement of chorismate to prephenate and the decarboxylation/dehydration of prephenate to phenylpyruvate. The protein is Bifunctional chorismate mutase/prephenate dehydratase (pheA) of Enterobacter agglomerans (Erwinia herbicola).